The sequence spans 258 residues: MSLIDPRAIIDPTAILADSVEVGPWSIIGPGVEIGEGTVVGPHVVLRGPTKIGKHNRIYQFSSVGEDTPDLKYKGEETRLVIGDHNVIREGVTIHRGTVQDRAETTLGDHNLIMAYAHIGHDSVIGNHVILVNNTALAGHVHVDDWAILSGFTLVHQFCHIGAHSFSGMGTAIGKDVPAFVTVFGNPAEARSMNFEGMRRRGFSEEAIHALRRAYKTVYRQGLTIAQALSDLAEPAAQFPEVAVFLQSIQTSTRGIIR.

It belongs to the transferase hexapeptide repeat family. LpxA subfamily. In terms of assembly, homotrimer.

It is found in the cytoplasm. The catalysed reaction is a (3R)-hydroxyacyl-[ACP] + UDP-N-acetyl-alpha-D-glucosamine = a UDP-3-O-[(3R)-3-hydroxyacyl]-N-acetyl-alpha-D-glucosamine + holo-[ACP]. Its pathway is glycolipid biosynthesis; lipid IV(A) biosynthesis; lipid IV(A) from (3R)-3-hydroxytetradecanoyl-[acyl-carrier-protein] and UDP-N-acetyl-alpha-D-glucosamine: step 1/6. Functionally, involved in the biosynthesis of lipid A, a phosphorylated glycolipid that anchors the lipopolysaccharide to the outer membrane of the cell. In Pseudomonas syringae pv. tomato (strain ATCC BAA-871 / DC3000), this protein is Acyl-[acyl-carrier-protein]--UDP-N-acetylglucosamine O-acyltransferase.